Reading from the N-terminus, the 154-residue chain is Large ribosomal subunit protein uL15 (154 aa).

Residues 1–57 (MRFQDLHPQAGSRRRKRRIGRGIAAGQGASGGFGMRGQKSRSGRPTRPGFEGGQNPL) are disordered. Residues 23-35 (IAAGQGASGGFGM) show a composition bias toward gly residues.

This sequence belongs to the universal ribosomal protein uL15 family. In terms of assembly, part of the 50S ribosomal subunit.

Its function is as follows. Binds to the 23S rRNA. The polypeptide is Large ribosomal subunit protein uL15 (Thermosynechococcus vestitus (strain NIES-2133 / IAM M-273 / BP-1)).